The sequence spans 308 residues: HPr kinase/phosphorylase (308 aa).

Residues His138 and Lys159 contribute to the active site. 153 to 160 lines the ATP pocket; the sequence is GESGLGKS. Ser160 serves as a coordination point for Mg(2+). Asp177 serves as the catalytic Proton acceptor; for phosphorylation activity. Proton donor; for dephosphorylation activity. The segment at 201–210 is important for the catalytic mechanism of both phosphorylation and dephosphorylation; the sequence is LEVRGLGLLD. Glu202 lines the Mg(2+) pocket. Arg243 is an active-site residue. The segment at 264-269 is important for the catalytic mechanism of dephosphorylation; it reads QVAAGR.

This sequence belongs to the HPrK/P family. Homohexamer. The cofactor is Mg(2+).

The catalysed reaction is [HPr protein]-L-serine + ATP = [HPr protein]-O-phospho-L-serine + ADP + H(+). The enzyme catalyses [HPr protein]-O-phospho-L-serine + phosphate + H(+) = [HPr protein]-L-serine + diphosphate. Catalyzes the ATP- as well as the pyrophosphate-dependent phosphorylation of a specific serine residue in HPr, a phosphocarrier protein of the phosphoenolpyruvate-dependent sugar phosphotransferase system (PTS). HprK/P also catalyzes the pyrophosphate-producing, inorganic phosphate-dependent dephosphorylation (phosphorolysis) of seryl-phosphorylated HPr (P-Ser-HPr). The sequence is that of HPr kinase/phosphorylase from Bordetella bronchiseptica (strain ATCC BAA-588 / NCTC 13252 / RB50) (Alcaligenes bronchisepticus).